We begin with the raw amino-acid sequence, 173 residues long: NADH-ubiquinone oxidoreductase chain 6 (173 aa).

5 consecutive transmembrane segments (helical) span residues 1–21 (MTYFVLFLGLCFVLGSLAVAS), 27–47 (YGVVGLVLASIAGCGWLLSLG), 48–68 (VSFVSLVLFMVYLGGMLVVFV), 87–107 (VVGYGVGFVAVLMVGLIVGGF), and 139–159 (CGVGMFLVAGWGLLLTLFVVL).

Belongs to the complex I subunit 6 family.

It is found in the mitochondrion membrane. It carries out the reaction a ubiquinone + NADH + 5 H(+)(in) = a ubiquinol + NAD(+) + 4 H(+)(out). Core subunit of the mitochondrial membrane respiratory chain NADH dehydrogenase (Complex I) that is believed to belong to the minimal assembly required for catalysis. Complex I functions in the transfer of electrons from NADH to the respiratory chain. The immediate electron acceptor for the enzyme is believed to be ubiquinone. The sequence is that of NADH-ubiquinone oxidoreductase chain 6 (MT-ND6) from Aethia cristatella (Crested auklet).